Here is a 497-residue protein sequence, read N- to C-terminus: Aldehyde dehydrogenase (497 aa).

NAD(+) is bound at residue Gly-241–Gly-246. Glu-264 acts as the Proton acceptor in catalysis. The Nucleophile role is filled by Cys-298.

Belongs to the aldehyde dehydrogenase family.

It carries out the reaction an aldehyde + NAD(+) + H2O = a carboxylate + NADH + 2 H(+). It participates in alcohol metabolism; ethanol degradation; acetate from ethanol: step 2/2. In Emericella nidulans (strain FGSC A4 / ATCC 38163 / CBS 112.46 / NRRL 194 / M139) (Aspergillus nidulans), this protein is Aldehyde dehydrogenase (aldA).